Consider the following 307-residue polypeptide: Elongation factor Ts (307 aa).

Positions 80-83 (TDFV) are involved in Mg(2+) ion dislocation from EF-Tu.

This sequence belongs to the EF-Ts family.

The protein localises to the cytoplasm. Functionally, associates with the EF-Tu.GDP complex and induces the exchange of GDP to GTP. It remains bound to the aminoacyl-tRNA.EF-Tu.GTP complex up to the GTP hydrolysis stage on the ribosome. This chain is Elongation factor Ts, found in Bradyrhizobium diazoefficiens (strain JCM 10833 / BCRC 13528 / IAM 13628 / NBRC 14792 / USDA 110).